The sequence spans 266 residues: Family of serine hydrolases 3 (266 aa).

Catalysis depends on charge relay system residues S117, D180, and H209.

The protein belongs to the AB hydrolase 3 family.

Functionally, serine hydrolase of unknown specificity. The sequence is that of Family of serine hydrolases 3 (FSH3) from Saccharomyces cerevisiae (strain ATCC 204508 / S288c) (Baker's yeast).